The chain runs to 356 residues: Cysteine protease XCP2 (356 aa).

An N-terminal signal peptide occupies residues M1–A26. A propeptide spans S27–A137 (activation peptide). 3 disulfides stabilise this stretch: C159/C201, C193/C234, and C292/C343. The active site involves C162. N181 carries an N-linked (GlcNAc...) asparagine glycan. Residues H298 and N318 contribute to the active site.

Belongs to the peptidase C1 family. As to quaternary structure, interacts with PRN2. Mostly expressed in roots, stems and flowers. Confined to tracheary elements, and specifically to xylem.

Its subcellular location is the vacuole. The protein localises to the cell membrane. Functionally, cysteine protease involved in xylem tracheary element (TE) autolysis during xylogenesis in roots. Participates in micro autolysis within the intact central vacuole before mega autolysis is initiated by tonoplast implosion. Involved in susceptibility to the bacterial plant pathogen Ralstonia solanacearum. This is Cysteine protease XCP2 from Arabidopsis thaliana (Mouse-ear cress).